The primary structure comprises 242 residues: MPGPVDATPPPELATAARTLFGDRLDLAVAYAGLLVTDGVIRGLIGPREAPRLWDRHLLNCAAATERIPLGATVVDVGSGAGLPGLVLAVARPDLSVVLVEPLARRTAFLVEAVEQLELGASVRVVRGRAEEVAVGGAGVEPLTGDVVTARAVAPLDRLARWCLPLVVPGGRMVALKGASAAGEAAEHAAVVQRLGGGAPEVHQCGVGVVEPPTTVIEIRRERVVATPRPASAKRSRGGRRG.

S-adenosyl-L-methionine-binding positions include Gly78, Leu83, 130 to 131 (AE), and Arg151.

It belongs to the methyltransferase superfamily. RNA methyltransferase RsmG family.

Its subcellular location is the cytoplasm. Functionally, specifically methylates the N7 position of guanine in position 518 of 16S rRNA. The polypeptide is Ribosomal RNA small subunit methyltransferase G (Salinispora arenicola (strain CNS-205)).